A 111-amino-acid polypeptide reads, in one-letter code: Iron-sulfur cluster assembly protein CyaY (111 aa).

It belongs to the frataxin family.

Involved in iron-sulfur (Fe-S) cluster assembly. May act as a regulator of Fe-S biogenesis. This is Iron-sulfur cluster assembly protein CyaY from Cupriavidus taiwanensis (strain DSM 17343 / BCRC 17206 / CCUG 44338 / CIP 107171 / LMG 19424 / R1) (Ralstonia taiwanensis (strain LMG 19424)).